Reading from the N-terminus, the 366-residue chain is Protein FAM110B (366 aa).

Disordered stretches follow at residues 127-150 (SSEGSSSGSGHKHSSRNWPPHRDT), 163-182 (KVYPTPGRGSPQESSSHVSR), and 214-253 (IPCSSSAPPLPPKPKVAAMKSPDADQVEPACGVSRRPSLQ). 2 positions are modified to phosphoserine: S234 and S297. The tract at residues 313-333 (DCEQSQDSNSDLRNDDSANDR) is disordered. Positions 322 to 331 (SDLRNDDSAN) are enriched in basic and acidic residues.

Belongs to the FAM110 family.

Its subcellular location is the cytoplasm. It localises to the cytoskeleton. The protein resides in the microtubule organizing center. It is found in the centrosome. The sequence is that of Protein FAM110B (Fam110b) from Rattus norvegicus (Rat).